Consider the following 73-residue polypeptide: Large ribosomal subunit protein bL31 (73 aa).

The protein belongs to the bacterial ribosomal protein bL31 family. Type A subfamily. In terms of assembly, part of the 50S ribosomal subunit.

Binds the 23S rRNA. This is Large ribosomal subunit protein bL31 (rpmE) from Jannaschia sp. (strain CCS1).